Here is a 532-residue protein sequence, read N- to C-terminus: Bone morphogenetic protein receptor type-1A (532 aa).

The first 23 residues, 1-23 (MTQLYTYIRLLGACLFIISHVQG), serve as a signal peptide directing secretion. Residues 24–152 (QNLDSMLHGT…IGPFFDGSVR (129 aa)) are Extracellular-facing. Intrachain disulfides connect cysteine 61–cysteine 82, cysteine 63–cysteine 67, and cysteine 76–cysteine 100. Residue asparagine 73 is glycosylated (N-linked (GlcNAc...) asparagine). Positions 107 to 109 (DFQ) are mediates specificity for BMP ligand. Intrachain disulfides connect cysteine 110–cysteine 124 and cysteine 125–cysteine 130. A helical transmembrane segment spans residues 153–176 (WLAVLISMAVCIVAMIVFSSCFCY). Residues 177 to 532 (KHYCKSISSR…KMVESQDVKI (356 aa)) are Cytoplasmic-facing. A GS domain is found at 204–233 (ESLKDLIDQSQSSGSGSGLPLLVQRTIAKQ). Residues 234–525 (IQMVRQVGKG…RIKKTLAKMV (292 aa)) form the Protein kinase domain. Residues 240 to 248 (VGKGRYGEV) and lysine 261 each bind ATP. Catalysis depends on aspartate 362, which acts as the Proton acceptor.

This sequence belongs to the protein kinase superfamily. TKL Ser/Thr protein kinase family. TGFB receptor subfamily. In terms of assembly, interacts with low affinity with GDF5; positively regulates chondrocyte differentiation. Interacts with BMP4. Interacts with SCUBE3. Interacts with TSC22D1/TSC-22. Interacts with BMP2; the interaction may induce HAMP expression. Interacts with BMP6. Interacts with heterodimers composed of BMP2 and BMP6 in vitro; the interaction may induce HAMP expression. The cofactor is Mg(2+). It depends on Mn(2+) as a cofactor. Post-translationally, glycosylated.

It localises to the cell membrane. The protein resides in the cell surface. The enzyme catalyses L-threonyl-[receptor-protein] + ATP = O-phospho-L-threonyl-[receptor-protein] + ADP + H(+). The catalysed reaction is L-seryl-[receptor-protein] + ATP = O-phospho-L-seryl-[receptor-protein] + ADP + H(+). In terms of biological role, on ligand binding, forms a receptor complex consisting of two type II and two type I transmembrane serine/threonine kinases. Type II receptors phosphorylate and activate type I receptors which autophosphorylate, then bind and activate SMAD transcriptional regulators. Receptor for BMP2, BMP4, GDF5 and GDF6. Positively regulates chondrocyte differentiation through GDF5 interaction. Mediates induction of adipogenesis by GDF6. May promote the expression of HAMP, potentially via its interaction with BMP2. The protein is Bone morphogenetic protein receptor type-1A (Bmpr1a) of Rattus norvegicus (Rat).